A 120-amino-acid chain; its full sequence is Piercer of microtubule wall 2 protein (120 aa).

The segment covering 1–10 has biased composition (basic and acidic residues); that stretch reads MTECDWEKKS. The tract at residues 1–25 is disordered; the sequence is MTECDWEKKSTSASNSDTEMKPELP.

The protein belongs to the PIERCE2 family. Microtubule inner protein component of sperm flagellar doublet microtubules. Interacts with CFAP53, ODAD1 and ODAD3; the interactions link the outer dynein arms docking complex (ODA-DC) to the internal microtubule inner proteins (MIP) in cilium axoneme. Expressed in trachea multiciliated cells.

It is found in the cytoplasm. Its subcellular location is the cytoskeleton. The protein resides in the cilium axoneme. The protein localises to the flagellum axoneme. Microtubule inner protein involved in the attachment of outer dynein arms (ODAs) to dynein-decorated doublet microtubules (DMTs) in cilia axoneme, which is required for motile cilia beating. This chain is Piercer of microtubule wall 2 protein (PIERCE2), found in Bos taurus (Bovine).